Here is a 201-residue protein sequence, read N- to C-terminus: 3-isopropylmalate dehydratase small subunit (201 aa).

It belongs to the LeuD family. LeuD type 1 subfamily. Heterodimer of LeuC and LeuD.

The enzyme catalyses (2R,3S)-3-isopropylmalate = (2S)-2-isopropylmalate. Its pathway is amino-acid biosynthesis; L-leucine biosynthesis; L-leucine from 3-methyl-2-oxobutanoate: step 2/4. Catalyzes the isomerization between 2-isopropylmalate and 3-isopropylmalate, via the formation of 2-isopropylmaleate. This chain is 3-isopropylmalate dehydratase small subunit, found in Allorhizobium ampelinum (strain ATCC BAA-846 / DSM 112012 / S4) (Agrobacterium vitis (strain S4)).